The sequence spans 264 residues: uncharacterized protein (264 aa).

Residues 182–198 traverse the membrane as a helical segment; sequence TVTGVSNALGFIIAALL.

It to E.coli YjiC.

The protein resides in the membrane. This is an uncharacterized protein from Escherichia coli (strain K12).